We begin with the raw amino-acid sequence, 362 residues long: Putative membrane-bound acyltransferase YfiQ (362 aa).

10 helical membrane-spanning segments follow: residues 11–31 (CISC…MLQA), 44–64 (FRTL…FLLA), 82–102 (VIFV…TSAM), 119–139 (VFLG…YMLH), 153–173 (WVLS…SAAS), 181–201 (GGAF…FCLA), 220–240 (WVVY…SYVG), 252–267 (IMLY…FHLF), 283–303 (YSFS…VLLL), and 308–328 (IPAV…PIMT).

The protein belongs to the acyltransferase 3 family.

It localises to the cell membrane. The protein is Putative membrane-bound acyltransferase YfiQ (yfiQ) of Bacillus subtilis (strain 168).